A 151-amino-acid polypeptide reads, in one-letter code: MTIWVDADACPNVIKEILYRAAERMQLPLILVANQALRVPPSRFIRTLRVAAGFDVADNEIVRQCEAGDLVITADIPLAAEVLEKGAAALNPRGERYSDATIRERLTMCDFMDTLRASSVQTGGPNTLSPRDRQHFAAELDKWWLESQRKK.

It belongs to the UPF0178 family.

This chain is UPF0178 protein YaiI, found in Salmonella choleraesuis (strain SC-B67).